We begin with the raw amino-acid sequence, 197 residues long: Glycerol-3-phosphate acyltransferase (197 aa).

Transmembrane regions (helical) follow at residues 1-21, 50-70, 77-97, 111-131, 136-156, and 157-177; these read MNIL…GFLI, WPAL…VKIA, GLIE…PIWL, MFLA…LIVL, FVSL…FFYL, and GNYM…VIWK.

This sequence belongs to the PlsY family. Probably interacts with PlsX.

Its subcellular location is the cell inner membrane. It carries out the reaction an acyl phosphate + sn-glycerol 3-phosphate = a 1-acyl-sn-glycero-3-phosphate + phosphate. Its pathway is lipid metabolism; phospholipid metabolism. Catalyzes the transfer of an acyl group from acyl-phosphate (acyl-PO(4)) to glycerol-3-phosphate (G3P) to form lysophosphatidic acid (LPA). This enzyme utilizes acyl-phosphate as fatty acyl donor, but not acyl-CoA or acyl-ACP. This Prochlorococcus marinus (strain MIT 9312) protein is Glycerol-3-phosphate acyltransferase.